A 143-amino-acid polypeptide reads, in one-letter code: Large ribosomal subunit protein uL11 (143 aa).

The protein belongs to the universal ribosomal protein uL11 family. Part of the ribosomal stalk of the 50S ribosomal subunit. Interacts with L10 and the large rRNA to form the base of the stalk. L10 forms an elongated spine to which L12 dimers bind in a sequential fashion forming a multimeric L10(L12)X complex. In terms of processing, one or more lysine residues are methylated.

Its function is as follows. Forms part of the ribosomal stalk which helps the ribosome interact with GTP-bound translation factors. The chain is Large ribosomal subunit protein uL11 from Rhizobium etli (strain ATCC 51251 / DSM 11541 / JCM 21823 / NBRC 15573 / CFN 42).